Reading from the N-terminus, the 110-residue chain is U1-lycotoxin-Ls1mm (110 aa).

Residues 1–20 form the signal peptide; the sequence is MKFVLLFGVLLVTLFSYSSA. Residues 21-44 constitute a propeptide that is removed on maturation; sequence EMLDDFDQADEDELLSLIEKEEAR. Intrachain disulfides connect Cys-47–Cys-62, Cys-54–Cys-71, Cys-61–Cys-89, and Cys-73–Cys-87.

The protein belongs to the neurotoxin 19 (CSTX) family. 03 subfamily. As to expression, expressed by the venom gland.

It localises to the secreted. This Lycosa singoriensis (Wolf spider) protein is U1-lycotoxin-Ls1mm.